The primary structure comprises 300 residues: Ubiquinone biosynthesis protein COQ4, mitochondrial (300 aa).

The Zn(2+) site is built by H173, D174, H177, and E189.

It belongs to the COQ4 family. As to quaternary structure, component of a multi-subunit COQ enzyme complex, composed of at least COQ3, COQ4, COQ5, COQ6, COQ7 and COQ9. Zn(2+) serves as cofactor.

The protein resides in the mitochondrion inner membrane. The enzyme catalyses a 4-hydroxy-3-methoxy-5-(all-trans-polyprenyl)benzoate + H(+) = a 2-methoxy-6-(all-trans-polyprenyl)phenol + CO2. It functions in the pathway cofactor biosynthesis; ubiquinone biosynthesis. In terms of biological role, lyase that catalyzes the C1-decarboxylation of 4-hydroxy-3-methoxy-5-(all-trans-polyprenyl)benzoic acid into 2-methoxy-6-(all-trans-polyprenyl)phenol during ubiquinone biosynthesis. The chain is Ubiquinone biosynthesis protein COQ4, mitochondrial from Cryptococcus neoformans var. neoformans serotype D (strain B-3501A) (Filobasidiella neoformans).